The chain runs to 377 residues: Succinyl-diaminopimelate desuccinylase (377 aa).

His-67 is a Zn(2+) binding site. Residue Asp-69 is part of the active site. Asp-100 contacts Zn(2+). The active-site Proton acceptor is the Glu-134. Positions 135, 163, and 349 each coordinate Zn(2+).

Belongs to the peptidase M20A family. DapE subfamily. In terms of assembly, homodimer. Zn(2+) serves as cofactor. Co(2+) is required as a cofactor.

It catalyses the reaction N-succinyl-(2S,6S)-2,6-diaminopimelate + H2O = (2S,6S)-2,6-diaminopimelate + succinate. Its pathway is amino-acid biosynthesis; L-lysine biosynthesis via DAP pathway; LL-2,6-diaminopimelate from (S)-tetrahydrodipicolinate (succinylase route): step 3/3. Catalyzes the hydrolysis of N-succinyl-L,L-diaminopimelic acid (SDAP), forming succinate and LL-2,6-diaminopimelate (DAP), an intermediate involved in the bacterial biosynthesis of lysine and meso-diaminopimelic acid, an essential component of bacterial cell walls. The sequence is that of Succinyl-diaminopimelate desuccinylase from Shewanella frigidimarina (strain NCIMB 400).